Here is a 539-residue protein sequence, read N- to C-terminus: Sorting nexin-27 (539 aa).

The segment at 1 to 40 (MADEDGEGIHPSTPHRNGGGGGGSGLHCAGNGGGGGGGPR) is disordered. Residues 17–39 (NGGGGGGSGLHCAGNGGGGGGGP) are compositionally biased toward gly residues. Residues 41 to 134 (VVRIVKSESG…ELILTVLSVP (94 aa)) enclose the PDZ domain. Ser-49 and Ser-60 each carry phosphoserine. Residues 159–267 (QAVPISVPTY…EFLSESDENY (109 aa)) enclose the PX domain. The region spanning 271-360 (SDVELRVALP…TCLTIRKWLF (90 aa)) is the Ras-associating domain. The segment at 271–360 (SDVELRVALP…TCLTIRKWLF (90 aa)) is FERM-like region F1. The FERM-like region F2 stretch occupies residues 371 to 419 (NDLAVTYFFHQAVDDVKKGYIKAEEKSYQLQKLYEQRKMVMYLNMLRTC). The FERM-like region F3 stretch occupies residues 423 to 523 (NEIIFPHCAC…RVFCELKWRK (101 aa)).

In terms of assembly, core component of the SNX27-retromer, a multiprotein complex composed of SNX27, the WASH complex and the retromer complex. Interacts (via PDZ domain) with a number of target transmembrane proteins (via PDZ-binding motif): ABCC4, ADRB2, ARHGEF7, GRIA1, GRIA2, GRIN1, GRIN2A GRIN2C, KCNJ6, KCNJ9 and SLC2A1/GLUT1. Interacts (via the FERM-like regions) with the WASH complex. Interacts with SNX1. Interacts with CYTIP. Interacts with DGKZ. Interacts with MCC. Interacts (via PDZ domains) with SLC9A3; directs SLC9A3 membrane insertion from early endosomes to the plasma membrane. Isoform 1 is predominantly expressed in the testis, whereas isoform 2 is predominant in various brain regions, including, neocortex, paleocortex, striatum, hippocampus, cerebellum and brain stem. Expressed in cells of hematopoietic origin.

It is found in the early endosome membrane. The protein resides in the cytoplasm. Its subcellular location is the cytosol. Involved in the retrograde transport from endosome to plasma membrane, a trafficking pathway that promotes the recycling of internalized transmembrane proteins. Following internalization, endocytosed transmembrane proteins are delivered to early endosomes and recycled to the plasma membrane instead of being degraded in lysosomes. SNX27 specifically binds and directs sorting of a subset of transmembrane proteins containing a PDZ-binding motif at the C-terminus: following interaction with target transmembrane proteins, associates with the retromer complex, preventing entry into the lysosomal pathway, and promotes retromer-tubule based plasma membrane recycling. SNX27 also binds with the WASH complex. Interacts with membranes containing phosphatidylinositol-3-phosphate (PtdIns(3P)). May participate in establishment of natural killer cell polarity. Recruits CYTIP to early endosomes. The protein is Sorting nexin-27 (Snx27) of Rattus norvegicus (Rat).